Reading from the N-terminus, the 699-residue chain is Ferric reduction oxidase 4 (699 aa).

Over Met-1–Lys-9 the chain is Cytoplasmic. The helical transmembrane segment at Thr-10–Asn-29 threads the bilayer. Residues Leu-30 to Asn-54 are Lumenal-facing. The helical transmembrane segment at Leu-55–Leu-73 threads the bilayer. At His-74–Pro-101 the chain is on the cytoplasmic side. The helical transmembrane segment at Leu-102 to Tyr-125 threads the bilayer. The Lumenal portion of the chain corresponds to Asn-126 to Lys-190. The Ferric oxidoreductase domain maps to Gly-157–Phe-275. A helical membrane pass occupies residues Tyr-191–Trp-214. His-192 and His-206 together coordinate heme. Over Ala-215 to Tyr-264 the chain is Cytoplasmic. The chain crosses the membrane as a helical span at residues Thr-265–Leu-289. 2 residues coordinate heme: His-266 and His-279. Topologically, residues Pro-290 to Arg-311 are lumenal. Residues Gln-305–Asp-408 form the FAD-binding FR-type domain. A helical membrane pass occupies residues Leu-312 to Gly-332. Residues Leu-333 to Asn-525 lie on the Cytoplasmic side of the membrane. His-354–Thr-357 is a binding site for FAD. An NAD(+)-binding site is contributed by Gly-400–Gly-403. A helical membrane pass occupies residues Phe-526–Thr-548. The Lumenal segment spans residues Arg-549 to Arg-568. The chain crosses the membrane as a helical span at residues Gly-569–Trp-590. The Cytoplasmic portion of the chain corresponds to Arg-591 to Trp-699.

The protein belongs to the ferric reductase (FRE) family. FAD serves as cofactor. In terms of tissue distribution, expressed in siliques. Detected at low levels in roots, cotyledon veins and shoots.

It localises to the membrane. The enzyme catalyses 2 a Fe(II)-siderophore + NAD(+) + H(+) = 2 a Fe(III)-siderophore + NADH. Its function is as follows. Ferric chelate reductase. May participate in the transport of electrons to a Fe(3+) ion via FAD and heme intermediates. May function as root surface cupric chelate reductase and participate in the reduction of Cu(2+), for Cu(+) acquisition via Cu(+) transporters in response to copper deficiency. The sequence is that of Ferric reduction oxidase 4 (FRO4) from Arabidopsis thaliana (Mouse-ear cress).